The chain runs to 246 residues: 1-(5-phosphoribosyl)-5-[(5-phosphoribosylamino)methylideneamino] imidazole-4-carboxamide isomerase (246 aa).

Asp-10 (proton acceptor) is an active-site residue. Asp-135 acts as the Proton donor in catalysis.

This sequence belongs to the HisA/HisF family.

It localises to the cytoplasm. The enzyme catalyses 1-(5-phospho-beta-D-ribosyl)-5-[(5-phospho-beta-D-ribosylamino)methylideneamino]imidazole-4-carboxamide = 5-[(5-phospho-1-deoxy-D-ribulos-1-ylimino)methylamino]-1-(5-phospho-beta-D-ribosyl)imidazole-4-carboxamide. The protein operates within amino-acid biosynthesis; L-histidine biosynthesis; L-histidine from 5-phospho-alpha-D-ribose 1-diphosphate: step 4/9. This is 1-(5-phosphoribosyl)-5-[(5-phosphoribosylamino)methylideneamino] imidazole-4-carboxamide isomerase from Methanococcoides burtonii (strain DSM 6242 / NBRC 107633 / OCM 468 / ACE-M).